Here is a 493-residue protein sequence, read N- to C-terminus: Putative lon protease homolog (493 aa).

Residue 52 to 59 (GPPGVGKS) participates in ATP binding.

This sequence belongs to the peptidase S16 family.

The polypeptide is Putative lon protease homolog (Thermoplasma acidophilum (strain ATCC 25905 / DSM 1728 / JCM 9062 / NBRC 15155 / AMRC-C165)).